Consider the following 309-residue polypeptide: Electron transfer flavoprotein subunit alpha (309 aa).

Position 253–281 (Leu253–Asp281) interacts with FAD.

The protein belongs to the ETF alpha-subunit/FixB family. Heterodimer of an alpha and a beta subunit. The cofactor is FAD.

Functionally, the electron transfer flavoprotein serves as a specific electron acceptor for other dehydrogenases. It transfers the electrons to the main respiratory chain via ETF-ubiquinone oxidoreductase (ETF dehydrogenase). The polypeptide is Electron transfer flavoprotein subunit alpha (etfA) (Pseudomonas aeruginosa (strain ATCC 15692 / DSM 22644 / CIP 104116 / JCM 14847 / LMG 12228 / 1C / PRS 101 / PAO1)).